We begin with the raw amino-acid sequence, 151 residues long: Small ribosomal subunit protein uS15 (151 aa).

This sequence belongs to the universal ribosomal protein uS15 family. As to quaternary structure, component of the small ribosomal subunit.

Its subcellular location is the cytoplasm. In terms of biological role, component of the small ribosomal subunit. The ribosome is a large ribonucleoprotein complex responsible for the synthesis of proteins in the cell. This Gillichthys mirabilis (Long-jawed mudsucker) protein is Small ribosomal subunit protein uS15 (rps13).